A 907-amino-acid polypeptide reads, in one-letter code: Protein translocase subunit SecA (907 aa).

Residues glutamine 87, 105–109 (GEGKT), and aspartate 506 contribute to the ATP site. Over residues 834 to 850 (LEQQREEEAREQAEKMK) the composition is skewed to basic and acidic residues. The interval 834–907 (LEQQREEEAR…KYKQCHGKIE (74 aa)) is disordered. Residues 864–875 (QPQPSQQQGEQP) show a composition bias toward low complexity. Zn(2+)-binding residues include cysteine 891, cysteine 893, cysteine 902, and histidine 903. The segment covering 897–907 (KKYKQCHGKIE) has biased composition (basic residues).

It belongs to the SecA family. As to quaternary structure, monomer and homodimer. Part of the essential Sec protein translocation apparatus which comprises SecA, SecYEG and auxiliary proteins SecDF-YajC and YidC. Requires Zn(2+) as cofactor.

It localises to the cell inner membrane. It is found in the cytoplasm. It carries out the reaction ATP + H2O + cellular proteinSide 1 = ADP + phosphate + cellular proteinSide 2.. Its function is as follows. Part of the Sec protein translocase complex. Interacts with the SecYEG preprotein conducting channel. Has a central role in coupling the hydrolysis of ATP to the transfer of proteins into and across the cell membrane, serving both as a receptor for the preprotein-SecB complex and as an ATP-driven molecular motor driving the stepwise translocation of polypeptide chains across the membrane. The sequence is that of Protein translocase subunit SecA from Alcanivorax borkumensis (strain ATCC 700651 / DSM 11573 / NCIMB 13689 / SK2).